A 434-amino-acid chain; its full sequence is UDP-N-acetylglucosamine 1-carboxyvinyltransferase (434 aa).

22–23 (KN) contributes to the phosphoenolpyruvate binding site. R97 contacts UDP-N-acetyl-alpha-D-glucosamine. Catalysis depends on D121, which acts as the Proton donor. Positions 319 and 341 each coordinate UDP-N-acetyl-alpha-D-glucosamine.

The protein belongs to the EPSP synthase family. MurA subfamily.

Its subcellular location is the cytoplasm. The catalysed reaction is phosphoenolpyruvate + UDP-N-acetyl-alpha-D-glucosamine = UDP-N-acetyl-3-O-(1-carboxyvinyl)-alpha-D-glucosamine + phosphate. The protein operates within cell wall biogenesis; peptidoglycan biosynthesis. Cell wall formation. Adds enolpyruvyl to UDP-N-acetylglucosamine. The polypeptide is UDP-N-acetylglucosamine 1-carboxyvinyltransferase (Porphyromonas gingivalis (strain ATCC BAA-308 / W83)).